A 1058-amino-acid chain; its full sequence is Protein translocase subunit SECA2, chloroplastic (1058 aa).

A chloroplast-targeting transit peptide spans 1–58 (MGSVSNLVSPNICHPAPPCLTSRSNKFPWTKPISGLLFYRSVTPIKRCHLVRRSCVVS). 167–174 (MKTGEGKT) is a binding site for ATP.

This sequence belongs to the SecA family. In terms of assembly, part of a second Sec protein translocation apparatus. Interacts probably with SCY2.

It is found in the plastid. Its subcellular location is the chloroplast membrane. The enzyme catalyses ATP + H2O + chloroplast-proteinSide 1 = ADP + phosphate + chloroplast-proteinSide 2.. In terms of biological role, involved in protein export. Probably interacts with other proteins to allow the postimport or conservative sorting pathway for inner membrane proteins in plastids. May have a central role in coupling the hydrolysis of ATP to the transfer of proteins across the membrane. The polypeptide is Protein translocase subunit SECA2, chloroplastic (Arabidopsis thaliana (Mouse-ear cress)).